Consider the following 230-residue polypeptide: Large ribosomal subunit protein uL1c (230 aa).

It belongs to the universal ribosomal protein uL1 family. Part of the 50S ribosomal subunit.

The protein localises to the plastid. It localises to the chloroplast. Its function is as follows. Binds directly to 23S rRNA. Might be involved in E site tRNA release (Potential). The protein is Large ribosomal subunit protein uL1c (rpl1) of Trieres chinensis (Marine centric diatom).